The primary structure comprises 100 residues: Small ribosomal subunit protein uS14c (100 aa).

Residues 1-31 (MAKKSLIQREKKRQKLEQKYHSIRRSSKKEI) are disordered.

This sequence belongs to the universal ribosomal protein uS14 family. As to quaternary structure, part of the 30S ribosomal subunit.

Its subcellular location is the plastid. The protein resides in the chloroplast. Its function is as follows. Binds 16S rRNA, required for the assembly of 30S particles. This is Small ribosomal subunit protein uS14c from Atropa belladonna (Belladonna).